Reading from the N-terminus, the 436-residue chain is Testican-3 (436 aa).

A signal peptide spans 1-21 (MLKVSAVLCVCAAAWCSQSLA). Intrachain disulfides connect cysteine 90–cysteine 101, cysteine 95–cysteine 111, cysteine 139–cysteine 169, cysteine 142–cysteine 162, cysteine 151–cysteine 183, cysteine 317–cysteine 341, cysteine 352–cysteine 359, and cysteine 361–cysteine 380. A Kazal-like domain is found at 133 to 185 (GPILSTCKQCPVVYPSPVCGSDGHTYSFQCKLEYQACVLGKQISVKCEGHCPC). Positions 314 to 380 (DPPCQTELSN…GSRINGVADC (67 aa)) constitute a Thyroglobulin type-1 domain. O-linked (Xyl...) (glycosaminoglycan) serine glycosylation is found at serine 387 and serine 392. The segment at 393–436 (GDFHEWTDDEDDEDDIMNDEDEIEDDDEDEGDDDDGGDDHDVYI) is disordered. Positions 399–430 (TDDEDDEDDIMNDEDEIEDDDEDEGDDDDGGD) are enriched in acidic residues.

Post-translationally, contains chondroitin sulfate and heparan sulfate O-linked oligosaccharides. As to expression, expressed in brain.

The protein resides in the secreted. The protein localises to the extracellular space. Its subcellular location is the extracellular matrix. In terms of biological role, may participate in diverse steps of neurogenesis. Inhibits the processing of pro-matrix metalloproteinase 2 (MMP-2) by MT1-MMP and MT3-MMP. May interfere with tumor invasion. This is Testican-3 (SPOCK3) from Homo sapiens (Human).